The sequence spans 78 residues: Putative membrane protein insertion efficiency factor (78 aa).

This sequence belongs to the UPF0161 family.

It localises to the cell membrane. Functionally, could be involved in insertion of integral membrane proteins into the membrane. The polypeptide is Putative membrane protein insertion efficiency factor (Bacillus anthracis (strain A0248)).